Consider the following 379-residue polypeptide: Cobalt-precorrin-5B C(1)-methyltransferase (379 aa).

Belongs to the CbiD family.

The catalysed reaction is Co-precorrin-5B + S-adenosyl-L-methionine = Co-precorrin-6A + S-adenosyl-L-homocysteine. It functions in the pathway cofactor biosynthesis; adenosylcobalamin biosynthesis; cob(II)yrinate a,c-diamide from sirohydrochlorin (anaerobic route): step 6/10. Its function is as follows. Catalyzes the methylation of C-1 in cobalt-precorrin-5B to form cobalt-precorrin-6A. In Salmonella choleraesuis (strain SC-B67), this protein is Cobalt-precorrin-5B C(1)-methyltransferase.